Consider the following 506-residue polypeptide: Sucrose transport protein SUT3 (506 aa).

Residues 1 to 20 (MAVDMELDGGGDGKGKAPPQ) lie on the Cytoplasmic side of the membrane. A helical transmembrane segment spans residues 21-41 (ISLSGLFLACMVAGGVQYGWA). The Extracellular portion of the chain corresponds to 42–54 (LQLSLLTPYVQTL). A helical transmembrane segment spans residues 55–75 (GIPHALTSVMWLCGPIAGLIV). Topologically, residues 76–94 (QPCVGLYSDKCTSSLGRRR) are cytoplasmic. Residues 95–115 (PFILTGCIIICISVIVIGFSS) traverse the membrane as a helical segment. Residues 116–135 (DIGYALGDTTEDCKVYRGPR) are Extracellular-facing. A helical transmembrane segment spans residues 136-156 (YHAAAAFILGFWLLDFSNNTV). Residues 157–171 (QGPARALMADLSGRH) lie on the Cytoplasmic side of the membrane. A helical transmembrane segment spans residues 172-192 (GPSAANAIFCSWMALGNILGY). At 193-220 (SSGSTNDWHKWFPFLMTRACCEACANLK) the chain is on the extracellular side. Residues 221-241 (AAFLVAVVFLGLSTAVTMVFA) traverse the membrane as a helical segment. Residues 242–275 (REVALDPVAAAKRNEGEASGLLAVFKGMKNLPVG) are Cytoplasmic-facing. The helical transmembrane segment at 276–296 (MPSVLIVTGLTWLSWFPFILF) threads the bilayer. The Extracellular portion of the chain corresponds to 297–327 (DTDWMGREIYHGRPDGSPAEVTAFQEGVRQG). Residues 328–348 (AFGLLLNSIVLGISSFLIEPM) traverse the membrane as a helical segment. Topologically, residues 349–355 (CRRLGAR) are cytoplasmic. Residues 356–376 (AVWVMSSAVVCVAMAAVSVLS) form a helical membrane-spanning segment. The Extracellular portion of the chain corresponds to 377–404 (AWSLGDFGGSVQDAARAPAEEGGVRASA). A helical transmembrane segment spans residues 405-425 (LALFVFLGLPFAVLCSVPFAV). At 426–441 (TAQLAASRGGGQGLCT) the chain is on the cytoplasmic side. Residues 442-462 (GVLNISIVVPQMAIALGAGPW) traverse the membrane as a helical segment. The Extracellular portion of the chain corresponds to 463 to 470 (DELFGEGN). The helical transmembrane segment at 471–491 (IPAFAMASVFAAAAAAAGVVL) threads the bilayer. At 492–506 (LPKVSVRSVSMAGGH) the chain is on the cytoplasmic side.

Belongs to the glycoside-pentoside-hexuronide (GPH) cation symporter transporter (TC 2.A.2.4) family. In terms of assembly, homodimer. Widely expressed. Highest expression in sink leaves and lowest in germinating seeds.

The protein resides in the cell membrane. It participates in glycan biosynthesis; sucrose metabolism. In terms of biological role, responsible for the transport of sucrose into the cell, with the concomitant uptake of protons (symport system). May also transport other glucosides. The sequence is that of Sucrose transport protein SUT3 (SUT3) from Oryza sativa subsp. japonica (Rice).